The primary structure comprises 1469 residues: WASH complex subunit 2 (1469 aa).

S136 bears the Phosphoserine mark. 2 disordered regions span residues 178–349 (YDSK…RMPV) and 367–546 (KVQS…RVAG). A compositionally biased stretch (basic and acidic residues) spans 197-206 (SDEKEPETKK). S227 carries the phosphoserine modification. 2 stretches are compositionally biased toward low complexity: residues 276 to 293 (SPPSDDPPSTSSSPTSSP) and 306 to 316 (STASLSSSSSS). Residues 351-372 (LFNEDEFKSFMSEIVDKVQSKT) carry the LFa 1 motif. Polar residues predominate over residues 370–385 (SKTPSSSVSPATTIST). Over residues 387–399 (EPPKTKKPVEEYP) the composition is skewed to basic and acidic residues. Phosphoserine occurs at positions 422 and 426. Residues 519-528 (FDDDDLDIDD) show a composition bias toward acidic residues. Residues 550 to 563 (LFEDDDQDDVTDLF) carry the LFa 5 motif. The segment at 571 to 591 (IPKETSSGVSPNKNVETPVAS) is disordered. The segment covering 574–585 (ETSSGVSPNKNV) has biased composition (polar residues). S580 carries the post-translational modification Phosphoserine. The residue at position 587 (T587) is a Phosphothreonine. The short motif at 595–605 (LFDDIEDEDLF) is the LFa 6 element. Disordered stretches follow at residues 607–760 (TPKA…TDLF), 933–1254 (ALPN…KLFS), and 1316–1469 (VTTA…LDFK). Basic and acidic residues-rich tracts occupy residues 626-649 (GEDKKQSEIAEQKSKNIETGEKQH) and 671-687 (TEQKSDDKEWEAVKDDT). T693 bears the Phosphothreonine mark. The LFa 8 motif lies at 698 to 709 (LFSEDLTDDELF). 3 stretches are compositionally biased toward polar residues: residues 709–728 (FSSTSNNMAEPKSANETNEF), 735–745 (YTSQTEENVSP), and 938–956 (PSATKPSPVTPGDQPSVSS). Basic and acidic residues-rich tracts occupy residues 971–990 (DNDHAGEEVQKEAEPQKDEL), 1031–1042 (ETDRSEVKETPE), and 1077–1089 (RKQESSSSERDEP). Residues 1091 to 1109 (ATVQTEAEAPSSGQNTVSS) show a composition bias toward polar residues. Positions 1118-1136 (NKSRARGPAKRRPSTRRGR) are enriched in basic residues. Over residues 1159–1170 (DSPEVEHSERSS) the composition is skewed to basic and acidic residues. 7 positions are modified to phosphoserine: S1241, S1245, S1254, S1344, S1380, S1381, and S1408. 2 stretches are compositionally biased toward low complexity: residues 1417 to 1426 (FGGSSTSKAA) and 1434 to 1452 (AARTASKPPASKTTTPTAT).

It belongs to the FAM21 family. As to quaternary structure, component of the WASH complex.

In terms of biological role, acts at least in part as component of the WASH complex which may regulate wash nucleation-promoting factor (NPF) activity and is required for its membrane targeting during endosomal sorting. The sequence is that of WASH complex subunit 2 from Drosophila melanogaster (Fruit fly).